Reading from the N-terminus, the 322-residue chain is Putative DNA-directed RNA polymerase subunit alpha-like 2 (322 aa).

The segment at 1–232 (MSNPNNGAEW…GLLSLVFQAE (232 aa)) is alpha N-terminal domain (alpha-NTD). Residues 280–322 (EGPVTDEEGDSIDPTFTPVQKWDITMNSYQYSGETFQGLLSRF) are alpha C-terminal domain (alpha-CTD).

This sequence belongs to the RNA polymerase alpha chain family. In plastids the minimal PEP RNA polymerase catalytic core is composed of four subunits: alpha, beta, beta', and beta''. When a (nuclear-encoded) sigma factor is associated with the core the holoenzyme is formed, which can initiate transcription.

The protein localises to the plastid. It localises to the chloroplast. It catalyses the reaction RNA(n) + a ribonucleoside 5'-triphosphate = RNA(n+1) + diphosphate. DNA-dependent RNA polymerase catalyzes the transcription of DNA into RNA using the four ribonucleoside triphosphates as substrates. The polypeptide is Putative DNA-directed RNA polymerase subunit alpha-like 2 (rpoAL2-A) (Pelargonium hortorum (Common geranium)).